The primary structure comprises 281 residues: uncharacterized protein (281 aa).

This is an uncharacterized protein from Haloarcula marismortui (strain ATCC 43049 / DSM 3752 / JCM 8966 / VKM B-1809) (Halobacterium marismortui).